The following is a 563-amino-acid chain: Probable tRNA (uracil-O(2)-)-methyltransferase (563 aa).

The C3H1-type zinc-finger motif lies at 536–563 (TIRKAPCWMSLHHPDGCPVGQEACRYEH).

The protein belongs to the TRM44 family.

The protein localises to the cytoplasm. It catalyses the reaction uridine(44) in tRNA(Ser) + S-adenosyl-L-methionine = 2'-O-methyluridine(44) in tRNA(Ser) + S-adenosyl-L-homocysteine + H(+). Its function is as follows. Probable adenosyl-L-methionine (AdoMet)-dependent tRNA (uracil-O(2)-)-methyltransferase. In Caenorhabditis elegans, this protein is Probable tRNA (uracil-O(2)-)-methyltransferase.